We begin with the raw amino-acid sequence, 635 residues long: Chaperone protein DnaK (635 aa).

Residue threonine 198 is modified to Phosphothreonine; by autocatalysis. Residues 597 to 635 are disordered; that stretch reads LYEQDQANNERHDTPETEKAEGDNVVDAEFQEIDDQDKK. Residues 604 to 618 are compositionally biased toward basic and acidic residues; that stretch reads NNERHDTPETEKAEG. The segment covering 620 to 635 has biased composition (acidic residues); the sequence is NVVDAEFQEIDDQDKK.

The protein belongs to the heat shock protein 70 family.

In terms of biological role, acts as a chaperone. This is Chaperone protein DnaK from Zymomonas mobilis subsp. mobilis (strain ATCC 31821 / ZM4 / CP4).